Here is a 141-residue protein sequence, read N- to C-terminus: SLSTKDKETVKAFWSKVSGKSEDIGNDALSRMLVVYPQTKTYFSHWKELTPGSAPVRKHGMTVMKGVGDAVSKIEDLTAGLMELSELHAFTLRVDPANFKISHNILVVFAIMFPKEFTAEVHVSMDKFLAALARALSEKYR.

Ser1 carries the N-acetylserine modification. The Globin domain occupies 1-141; sequence SLSTKDKETV…LARALSEKYR (141 aa). Residue His59 participates in O2 binding. His88 serves as a coordination point for heme b.

Belongs to the globin family. In terms of assembly, hb2 is a heterotetramer of two alpha-2 chains and two beta chains. Red blood cells.

Involved in oxygen transport from gills to the various peripheral tissues. The sequence is that of Hemoglobin subunit alpha-2 (hba2) from Notothenia angustata (Rockcod).